Reading from the N-terminus, the 170-residue chain is Photosystem II extrinsic protein V (170 aa).

An N-terminal signal peptide occupies residues 1–34 (MNKILGIDPLKKFIFGISAFVLLFWQLNVGAANA). C70, C73, H74, and H125 together coordinate heme c.

It belongs to the cytochrome c family. PsbV subfamily. PSII is composed of 1 copy each of membrane proteins PsbA, PsbB, PsbC, PsbD, PsbE, PsbF, PsbH, PsbI, PsbJ, PsbK, PsbL, PsbM, PsbT, PsbX, PsbY, PsbZ, Psb30/Ycf12, peripheral proteins PsbO, CyanoQ (PsbQ), PsbU, PsbV and a large number of cofactors. It forms dimeric complexes. It depends on heme c as a cofactor.

The protein resides in the cellular thylakoid membrane. Its function is as follows. One of the extrinsic, lumenal subunits of photosystem II (PSII). PSII is a light-driven water plastoquinone oxidoreductase, using light energy to abstract electrons from H(2)O, generating a proton gradient subsequently used for ATP formation. The extrinsic proteins stabilize the structure of photosystem II oxygen-evolving complex (OEC), the ion environment of oxygen evolution and protect the OEC against heat-induced inactivation. Low-potential cytochrome c that plays a role in the OEC of PSII. The sequence is that of Photosystem II extrinsic protein V from Picosynechococcus sp. (strain ATCC 27264 / PCC 7002 / PR-6) (Agmenellum quadruplicatum).